The following is a 359-amino-acid chain: Phospho-N-acetylmuramoyl-pentapeptide-transferase (359 aa).

Topologically, residues 1–25 (MLYQLALLLKDYWFAFNVLKYITFR) are periplasmic. A helical transmembrane segment spans residues 26–48 (SFTAVLIAFFLTLVLSPSFINRL). At 49–74 (RKIQRLFGGYVREYTPESHEVKKYTP) the chain is on the cytoplasmic side. Muraymycin D2 is bound by residues lysine 70 and threonine 75. A helical transmembrane segment spans residues 75–92 (TMGGIVILIVVTLSTLLL). Residues 93–98 (MRWDIK) are Periplasmic-facing. The chain crosses the membrane as a helical span at residues 99 to 120 (YTWVVLLSFLSFGTIGFWDDYV). At 121–130 (KLKNKKGISI) the chain is on the cytoplasmic side. The chain crosses the membrane as a helical span at residues 131 to 152 (KTKFLLQVLSASLISVLIYYWA). The Periplasmic portion of the chain corresponds to 153 to 172 (DIDTILYFPFFKELYVDLGV). The chain crosses the membrane as a helical span at residues 173 to 194 (LYLPFAVFVIVGSANAVNLTDG). The muraymycin D2 site is built by asparagine 190, aspartate 193, and aspartate 196. Over 195–197 (LDG) the chain is Cytoplasmic. The chain crosses the membrane as a helical span at residues 198-218 (LAIGPAMTTATALGVVAYAVG). Residues 219 to 233 (HSKIAQYLNIPYVPY) lie on the Periplasmic side of the membrane. Residues 234–255 (AGELTVFCFALVGAGLGFLWFN) traverse the membrane as a helical segment. The Cytoplasmic segment spans residues 256-264 (SFPAQMFMG). Residues glycine 264 and serine 268 each contribute to the muraymycin D2 site. A helical transmembrane segment spans residues 265-280 (DVGSLSIGASLATVAL). Over 281-284 (LTKS) the chain is Periplasmic. The chain crosses the membrane as a helical span at residues 285 to 310 (EFIFAVAAGVFVFETISVILQIIYFR). Residues glutamine 305 and alanine 321 each contribute to the muraymycin D2 site. At 311-332 (WTGGKRLFKRAPFHHHLELNGL) the chain is on the cytoplasmic side. The helical transmembrane segment at 333-355 (PEPKIVVRMWIISILLAIIAISM) threads the bilayer. Residues 356–359 (LKLR) are Periplasmic-facing.

It belongs to the glycosyltransferase 4 family. MraY subfamily. In terms of assembly, homodimer. Mg(2+) serves as cofactor. It depends on Mn(2+) as a cofactor.

The protein localises to the cell inner membrane. The catalysed reaction is UDP-N-acetyl-alpha-D-muramoyl-L-alanyl-gamma-D-glutamyl-meso-2,6-diaminopimeloyl-D-alanyl-D-alanine + di-trans,octa-cis-undecaprenyl phosphate = di-trans,octa-cis-undecaprenyl diphospho-N-acetyl-alpha-D-muramoyl-L-alanyl-D-glutamyl-meso-2,6-diaminopimeloyl-D-alanyl-D-alanine + UMP. The protein operates within cell wall biogenesis; peptidoglycan biosynthesis. With respect to regulation, inhibited by natural nucleoside antibiotics including tunicamycin, capuramycin and muraymycin. Usually the cofactor magnesium is not required for antibiotic binding. In terms of biological role, catalyzes the initial step of the lipid cycle reactions in the biosynthesis of the cell wall peptidoglycan: transfers peptidoglycan precursor phospho-MurNAc-pentapeptide from UDP-MurNAc-pentapeptide onto the lipid carrier undecaprenyl phosphate, yielding undecaprenyl-pyrophosphoryl-MurNAc-pentapeptide, known as lipid I. The chain is Phospho-N-acetylmuramoyl-pentapeptide-transferase from Aquifex aeolicus (strain VF5).